Consider the following 818-residue polypeptide: Lon protease (818 aa).

A Lon N-terminal domain is found at 14–216; it reads LPVLPLRDVV…KVFALIEREI (203 aa). Position 370-377 (370-377) interacts with ATP; that stretch reads GPPGVGKT. Residues 605 to 786 form the Lon proteolytic domain; that stretch reads ESLVGIVTGL…DEVIKVALMH (182 aa). Catalysis depends on residues serine 692 and lysine 735.

The protein belongs to the peptidase S16 family. In terms of assembly, homohexamer. Organized in a ring with a central cavity.

It localises to the cytoplasm. The catalysed reaction is Hydrolysis of proteins in presence of ATP.. Its function is as follows. ATP-dependent serine protease that mediates the selective degradation of mutant and abnormal proteins as well as certain short-lived regulatory proteins. Required for cellular homeostasis and for survival from DNA damage and developmental changes induced by stress. Degrades polypeptides processively to yield small peptide fragments that are 5 to 10 amino acids long. Binds to DNA in a double-stranded, site-specific manner. The polypeptide is Lon protease (Wolbachia pipientis subsp. Culex pipiens (strain wPip)).